Reading from the N-terminus, the 533-residue chain is Light-independent protochlorophyllide reductase subunit B (533 aa).

Asp36 contacts [4Fe-4S] cluster. Asp292 serves as the catalytic Proton donor. 428 to 429 (GL) serves as a coordination point for substrate.

Belongs to the ChlB/BchB/BchZ family. Protochlorophyllide reductase is composed of three subunits; BchL, BchN and BchB. Forms a heterotetramer of two BchB and two BchN subunits. [4Fe-4S] cluster serves as cofactor.

The catalysed reaction is chlorophyllide a + oxidized 2[4Fe-4S]-[ferredoxin] + 2 ADP + 2 phosphate = protochlorophyllide a + reduced 2[4Fe-4S]-[ferredoxin] + 2 ATP + 2 H2O. It functions in the pathway porphyrin-containing compound metabolism; bacteriochlorophyll biosynthesis (light-independent). In terms of biological role, component of the dark-operative protochlorophyllide reductase (DPOR) that uses Mg-ATP and reduced ferredoxin to reduce ring D of protochlorophyllide (Pchlide) to form chlorophyllide a (Chlide). This reaction is light-independent. The NB-protein (BchN-BchB) is the catalytic component of the complex. The protein is Light-independent protochlorophyllide reductase subunit B of Prosthecochloris aestuarii (strain DSM 271 / SK 413).